The sequence spans 497 residues: 3-octaprenyl-4-hydroxybenzoate carboxy-lyase (497 aa).

Residue Asn-175 coordinates Mn(2+). Prenylated FMN-binding positions include 178–180 (IYR), 192–194 (RWL), and 197–198 (RG). Mn(2+) is bound at residue Glu-241. Residue Asp-290 is the Proton donor of the active site.

The protein belongs to the UbiD family. In terms of assembly, homohexamer. Prenylated FMN is required as a cofactor. The cofactor is Mn(2+).

The protein resides in the cell membrane. It carries out the reaction a 4-hydroxy-3-(all-trans-polyprenyl)benzoate + H(+) = a 2-(all-trans-polyprenyl)phenol + CO2. The protein operates within cofactor biosynthesis; ubiquinone biosynthesis. Its function is as follows. Catalyzes the decarboxylation of 3-octaprenyl-4-hydroxy benzoate to 2-octaprenylphenol, an intermediate step in ubiquinone biosynthesis. This is 3-octaprenyl-4-hydroxybenzoate carboxy-lyase from Shigella flexneri.